We begin with the raw amino-acid sequence, 254 residues long: MKDIIIASFYKFIPLNDFESLREPILTKMHEIGIKGTIILAHEGVNGGFAGNREQMNVFYDYLRSDSRFADLHFKETYDSKNPFDKAKVKLRKEIVTMGVQKVDPSYNAGTYLSPEEWHQFIQDPNVILLDTRNDYEYELGTFKNAINPDIENFREFPDYVQRNLIDKKDKKIAMFCTGGIRCEKTTAYMKELGFQHVYQLHDGILNYLESIPESESLWEGKCFVFDDRVAVDQKLDRVYPQLPQDYKYEREQK.

In terms of domain architecture, Rhodanese spans 123–217; the sequence is QDPNVILLDT…YLESIPESES (95 aa). The active-site Cysteine persulfide intermediate is C177.

The protein belongs to the TrhO family.

It catalyses the reaction uridine(34) in tRNA + AH2 + O2 = 5-hydroxyuridine(34) in tRNA + A + H2O. Catalyzes oxygen-dependent 5-hydroxyuridine (ho5U) modification at position 34 in tRNAs. In Legionella pneumophila (strain Corby), this protein is tRNA uridine(34) hydroxylase.